The chain runs to 923 residues: Protocadherin gamma-B5 (923 aa).

An N-terminal signal peptide occupies residues 1–30 (MGRGTGELGRAERLPVLFLFLLSLFCPALC). Cadherin domains lie at 31–133 (EQIR…TPKF), 134–242 (TQNS…PPVF), 243–343 (NRDV…SPEV), 344–448 (TFHS…APVF), 449–558 (HQAS…APRV), and 566–671 (DGSA…LPDI). At 31 to 687 (EQIRYRIPEE…SDPQAELQFY (657 aa)) the chain is on the extracellular side. Asparagine 415 and asparagine 541 each carry an N-linked (GlcNAc...) asparagine glycan. Residues 688-708 (LVVALALISVLFLLAVILAIA) form a helical membrane-spanning segment. Over 709–923 (LRLRRSSSPA…KKKSGKKEKK (215 aa)) the chain is Cytoplasmic. Disordered stretches follow at residues 794-832 (TSHP…WPNN) and 893-923 (ATLT…KEKK). Residues 807–832 (WRFSQAQRPGTSGSQNGDDTGTWPNN) show a composition bias toward polar residues. Residues 913–923 (NKKKSGKKEKK) show a composition bias toward basic residues.

Its subcellular location is the cell membrane. Its function is as follows. Potential calcium-dependent cell-adhesion protein. May be involved in the establishment and maintenance of specific neuronal connections in the brain. The chain is Protocadherin gamma-B5 (PCDHGB5) from Pan troglodytes (Chimpanzee).